The sequence spans 126 residues: Fluoride-specific ion channel FluC (126 aa).

4 helical membrane-spanning segments follow: residues 5–25 (GFVA…FFSV), 36–56 (YGTL…VAFF), 69–89 (LAVT…SEVI), and 99–119 (WAML…AFGI). G76 and T79 together coordinate Na(+).

This sequence belongs to the fluoride channel Fluc/FEX (TC 1.A.43) family.

Its subcellular location is the cell inner membrane. It carries out the reaction fluoride(in) = fluoride(out). Na(+) is not transported, but it plays an essential structural role and its presence is essential for fluoride channel function. Fluoride-specific ion channel. Important for reducing fluoride concentration in the cell, thus reducing its toxicity. The sequence is that of Fluoride-specific ion channel FluC from Cupriavidus metallidurans (strain ATCC 43123 / DSM 2839 / NBRC 102507 / CH34) (Ralstonia metallidurans).